The primary structure comprises 568 residues: MHQQSPVDDVTALNSSALTMSEYPEGESPLQLQDVDSSRVGGHILSPIFNSSSPSLPVESHPVCIQSPYTDLGHDFTTLPFYSPALLGYGTSPLSECSSVRQSLSPTLFWPPHSQVSSLALHQQHTRLQQNHPTGGTWTELTPHDHSEEEYRKPLVKRVADAEETSTSLRGKADMHYCAVCSDYASGYHYGVWSCEGCKAFFKRSIQGHNDYICPATNQCTIDKNRRKSCQACRLRKCYEVGMMKCGLRRDRGSYQQRGAQQKRLARFSGRMRTSGPRSQEMKSVPCPLSGNEVVNMALTPEELIARIMDAEPPEIYLMKDMKKPFTEANVMMSLTNLADKELVHMISWAKKVPGFVELSLFDQVHLLECCWLEVLMLGLMWRSVNHPGKLIFSPDLSLSRDEGSCVQGFVEIFDMLLAATSRFRELKLQREEYVCLKAMILLNSNMCLSSSEGGEELQRRSKLLCLLDSVTDALVWAISKTGLSFQQRSTRLAHLLMLLSHIRHLSNKGMDHLHCMKMKKMVPLYDLLLEMLDAHIMHGSRLSHSGPAPKESTGVQEATLSVLKNDL.

The segment at 1–177 (MHQQSPVDDV…SLRGKADMHY (177 aa)) is modulating. NR C4-type zinc fingers lie at residues 178 to 198 (CAVCSDYASGYHYGVWSCEGC) and 214 to 238 (CPATNQCTIDKNRRKSCQACRLRKC). A DNA-binding region (nuclear receptor) is located at residues 178 to 243 (CAVCSDYASG…RLRKCYEVGM (66 aa)). Residues 300–536 (TPEELIARIM…DLLLEMLDAH (237 aa)) enclose the NR LBD domain.

Belongs to the nuclear hormone receptor family. NR3 subfamily. Binds DNA as a homodimer. Can form a heterodimer with ER-alpha.

The protein resides in the nucleus. In terms of biological role, binds estrogens with an affinity similar to that of ER-alpha, and activates expression of reporter genes containing estrogen response elements (ERE) in an estrogen-dependent manner. This is Estrogen receptor beta (esr2) from Oncorhynchus mykiss (Rainbow trout).